Reading from the N-terminus, the 249-residue chain is uncharacterized protein (249 aa).

7 to 14 contacts ATP; sequence GKGGCGKS.

This is an uncharacterized protein from Methanocaldococcus jannaschii (strain ATCC 43067 / DSM 2661 / JAL-1 / JCM 10045 / NBRC 100440) (Methanococcus jannaschii).